A 127-amino-acid chain; its full sequence is Large ribosomal subunit protein bL17 (127 aa).

The protein belongs to the bacterial ribosomal protein bL17 family. In terms of assembly, part of the 50S ribosomal subunit. Contacts protein L32.

In Salmonella paratyphi A (strain AKU_12601), this protein is Large ribosomal subunit protein bL17.